The following is a 107-amino-acid chain: Thiosulfate sulfurtransferase GlpE (107 aa).

Residues 19–107 form the Rhodanese domain; sequence KDHNARMVDI…WNKAGLPVEK (89 aa). The active-site Cysteine persulfide intermediate is C67.

This sequence belongs to the GlpE family.

The protein localises to the cytoplasm. It carries out the reaction thiosulfate + hydrogen cyanide = thiocyanate + sulfite + 2 H(+). The enzyme catalyses thiosulfate + [thioredoxin]-dithiol = [thioredoxin]-disulfide + hydrogen sulfide + sulfite + 2 H(+). Functionally, transferase that catalyzes the transfer of sulfur from thiosulfate to thiophilic acceptors such as cyanide or dithiols. May function in a CysM-independent thiosulfate assimilation pathway by catalyzing the conversion of thiosulfate to sulfite, which can then be used for L-cysteine biosynthesis. This Aliivibrio salmonicida (strain LFI1238) (Vibrio salmonicida (strain LFI1238)) protein is Thiosulfate sulfurtransferase GlpE.